A 319-amino-acid polypeptide reads, in one-letter code: D-alanine--D-alanine ligase (319 aa).

The region spanning 109–313 (KRVWLAEGLP…YEQLCLHILQ (205 aa)) is the ATP-grasp domain. An ATP-binding site is contributed by 139–194 (PDDLGLPLIVKPPREGSSIGVTKVLGYSQMQDAVALSARHDPDVLCEEFIDGAEVT). Mg(2+)-binding residues include aspartate 266, glutamate 280, and asparagine 282.

This sequence belongs to the D-alanine--D-alanine ligase family. Mg(2+) is required as a cofactor. It depends on Mn(2+) as a cofactor.

The protein resides in the cytoplasm. It carries out the reaction 2 D-alanine + ATP = D-alanyl-D-alanine + ADP + phosphate + H(+). It participates in cell wall biogenesis; peptidoglycan biosynthesis. Its function is as follows. Cell wall formation. This is D-alanine--D-alanine ligase from Methylibium petroleiphilum (strain ATCC BAA-1232 / LMG 22953 / PM1).